A 593-amino-acid chain; its full sequence is Eukaryotic peptide chain release factor subunit 1 (593 aa).

Belongs to the eukaryotic release factor 1 family. In terms of assembly, heterodimer of two subunits, one of which binds GTP.

Its subcellular location is the cytoplasm. Functionally, directs the termination of nascent peptide synthesis (translation) in response to the termination codons UAA, UAG and UGA. The protein is Eukaryotic peptide chain release factor subunit 1 of Caenorhabditis elegans.